The primary structure comprises 312 residues: MNSALFLPIALLLDRLLGEPPRWHPLVGFGRLVKAVERAAYPAAPGAEPVWRMRLRGAAAIALLLAPFTLAAWALARLPLLEIIVPVALLYLAVGARSLAQHAEVVRKALAEGDLQLARERVGWIVSRDTRELDEAGVARATIESVLENGSDAVFAALFWFLVLGAPGAVLYRLANTLDAMWGYKNERYLHFGWAAARFDDMLNYLPARLTALTYLLLGHAAKGWRCWRTQAPTWYSPNAGPVMAAGAGALGVSLGGGARYHGQWKERPPLGCGPTPTHEDIGRAVRLVNRGMWLWAALSLAAAILIGAIHA.

Transmembrane regions (helical) follow at residues 61 to 81 (IALL…LPLL), 83 to 103 (IIVP…AQHA), 152 to 172 (DAVF…AVLY), and 292 to 312 (GMWL…AIHA).

Belongs to the CobD/CbiB family.

The protein resides in the cell membrane. Its pathway is cofactor biosynthesis; adenosylcobalamin biosynthesis. Functionally, converts cobyric acid to cobinamide by the addition of aminopropanol on the F carboxylic group. The sequence is that of Cobalamin biosynthesis protein CobD from Chromobacterium violaceum (strain ATCC 12472 / DSM 30191 / JCM 1249 / CCUG 213 / NBRC 12614 / NCIMB 9131 / NCTC 9757 / MK).